Consider the following 56-residue polypeptide: Large ribosomal subunit protein bL33 (56 aa).

It belongs to the bacterial ribosomal protein bL33 family.

The chain is Large ribosomal subunit protein bL33 from Ehrlichia canis (strain Jake).